A 425-amino-acid chain; its full sequence is GTPase Obg (425 aa).

In terms of domain architecture, Obg spans 1 to 158 (MFIDKARIFV…RWITLELKMI (158 aa)). The OBG-type G domain occupies 159–330 (ADVGLLGFPN…VIAYVSKMLK (172 aa)). GTP is bound by residues 165–172 (GFPNVGKS), 190–194 (FTTLT), 212–215 (DIPG), 282–285 (NKFD), and 311–313 (SAA). The Mg(2+) site is built by serine 172 and threonine 192. Positions 344-425 (YRPELDIGTE…IYELEFEFYN (82 aa)) constitute an OCT domain.

Belongs to the TRAFAC class OBG-HflX-like GTPase superfamily. OBG GTPase family. As to quaternary structure, monomer. It depends on Mg(2+) as a cofactor.

The protein resides in the cytoplasm. Its function is as follows. An essential GTPase which binds GTP, GDP and possibly (p)ppGpp with moderate affinity, with high nucleotide exchange rates and a fairly low GTP hydrolysis rate. Plays a role in control of the cell cycle, stress response, ribosome biogenesis and in those bacteria that undergo differentiation, in morphogenesis control. The protein is GTPase Obg of Clostridioides difficile (strain 630) (Peptoclostridium difficile).